The chain runs to 428 residues: Cell division protein FtsZ (428 aa).

GTP-binding positions include 73-77 (GGGGN), 160-162 (GTG), E191, R195, and D239. The segment at 378–428 (NAANARVVSAPPKRTPTQTPLTNSPAPTPEPKEKSGLDIPDFLQRRRPPKN) is disordered. Residues 392–402 (TPTQTPLTNSP) are compositionally biased toward polar residues.

The protein belongs to the FtsZ family. Homodimer. Polymerizes to form a dynamic ring structure in a strictly GTP-dependent manner. Interacts directly with several other division proteins.

The protein localises to the cytoplasm. In terms of biological role, essential cell division protein that forms a contractile ring structure (Z ring) at the future cell division site. The regulation of the ring assembly controls the timing and the location of cell division. One of the functions of the FtsZ ring is to recruit other cell division proteins to the septum to produce a new cell wall between the dividing cells. Binds GTP and shows GTPase activity. This Nostoc sp. (strain PCC 7120 / SAG 25.82 / UTEX 2576) protein is Cell division protein FtsZ.